A 369-amino-acid polypeptide reads, in one-letter code: Molybdenum import ATP-binding protein ModC (369 aa).

The region spanning 3-246 (TRPEQASKDT…LDLPLAHGDS (244 aa)) is the ABC transporter domain. 44-51 (GPSGSGKT) lines the ATP pocket. A Mop domain is found at 305–369 (DTSILNILPA…AQIKGVAILG (65 aa)).

Belongs to the ABC transporter superfamily. Molybdate importer (TC 3.A.1.8) family. The complex is composed of two ATP-binding proteins (ModC), two transmembrane proteins (ModB) and a solute-binding protein (ModA).

Its subcellular location is the cell inner membrane. The catalysed reaction is molybdate(out) + ATP + H2O = molybdate(in) + ADP + phosphate + H(+). Functionally, part of the ABC transporter complex ModABC involved in molybdenum import. Responsible for energy coupling to the transport system. The chain is Molybdenum import ATP-binding protein ModC from Albidiferax ferrireducens (strain ATCC BAA-621 / DSM 15236 / T118) (Rhodoferax ferrireducens).